Consider the following 632-residue polypeptide: tRNA uridine 5-carboxymethylaminomethyl modification enzyme MnmG (632 aa).

13-18 (GGGHAG) provides a ligand contact to FAD. An NAD(+)-binding site is contributed by 274-288 (GPRYCPSIEDKVMRF).

Belongs to the MnmG family. Homodimer. Heterotetramer of two MnmE and two MnmG subunits. Requires FAD as cofactor.

The protein localises to the cytoplasm. Its function is as follows. NAD-binding protein involved in the addition of a carboxymethylaminomethyl (cmnm) group at the wobble position (U34) of certain tRNAs, forming tRNA-cmnm(5)s(2)U34. This is tRNA uridine 5-carboxymethylaminomethyl modification enzyme MnmG from Dichelobacter nodosus (strain VCS1703A).